Reading from the N-terminus, the 461-residue chain is Deoxyguanosinetriphosphate triphosphohydrolase-like protein (461 aa).

The segment at glutamate 22–aspartate 41 is disordered. The span at phenylalanine 24–aspartate 41 shows a compositional bias: basic and acidic residues. The HD domain occupies arginine 72–glycine 285.

Belongs to the dGTPase family. Type 2 subfamily.

The sequence is that of Deoxyguanosinetriphosphate triphosphohydrolase-like protein from Haemophilus influenzae (strain PittEE).